The sequence spans 467 residues: Acid phosphatase PHO11 (467 aa).

Residues 1–17 (MLKSAVYSILAASLVNA) form the signal peptide. H75 serves as the catalytic Nucleophile. 5 N-linked (GlcNAc...) asparagine glycosylation sites follow: N97, N162, N192, N250, and N315. Residue D338 is the Proton donor of the active site. N356, N390, N439, N445, and N461 each carry an N-linked (GlcNAc...) asparagine glycan.

The protein belongs to the histidine acid phosphatase family. Post-translationally, glycosylated during secretion across the membrane.

It carries out the reaction a phosphate monoester + H2O = an alcohol + phosphate. This is Acid phosphatase PHO11 (PHO11) from Saccharomyces cerevisiae (strain ATCC 204508 / S288c) (Baker's yeast).